Here is a 394-residue protein sequence, read N- to C-terminus: 1-deoxy-D-xylulose 5-phosphate reductoisomerase (394 aa).

Residues Thr-13, Gly-14, Ser-15, Val-16, Arg-40, Gln-41, and Asn-127 each coordinate NADPH. Lys-128 lines the 1-deoxy-D-xylulose 5-phosphate pocket. Glu-129 provides a ligand contact to NADPH. Asp-153 lines the Mn(2+) pocket. The 1-deoxy-D-xylulose 5-phosphate site is built by Ser-154, Glu-155, Ser-184, and His-207. Glu-155 provides a ligand contact to Mn(2+). Gly-213 lines the NADPH pocket. 4 residues coordinate 1-deoxy-D-xylulose 5-phosphate: Ser-220, Asn-225, Lys-226, and Glu-229. Glu-229 provides a ligand contact to Mn(2+).

The protein belongs to the DXR family. It depends on Mg(2+) as a cofactor. The cofactor is Mn(2+).

It carries out the reaction 2-C-methyl-D-erythritol 4-phosphate + NADP(+) = 1-deoxy-D-xylulose 5-phosphate + NADPH + H(+). Its pathway is isoprenoid biosynthesis; isopentenyl diphosphate biosynthesis via DXP pathway; isopentenyl diphosphate from 1-deoxy-D-xylulose 5-phosphate: step 1/6. Functionally, catalyzes the NADPH-dependent rearrangement and reduction of 1-deoxy-D-xylulose-5-phosphate (DXP) to 2-C-methyl-D-erythritol 4-phosphate (MEP). The sequence is that of 1-deoxy-D-xylulose 5-phosphate reductoisomerase from Chromobacterium violaceum (strain ATCC 12472 / DSM 30191 / JCM 1249 / CCUG 213 / NBRC 12614 / NCIMB 9131 / NCTC 9757 / MK).